The primary structure comprises 214 residues: Orotate phosphoribosyltransferase (214 aa).

5-phospho-alpha-D-ribose 1-diphosphate-binding positions include arginine 125, lysine 126, lysine 129, histidine 131, and 151 to 159 (EDTSTTGNS). Residues threonine 155 and arginine 183 each coordinate orotate.

It belongs to the purine/pyrimidine phosphoribosyltransferase family. PyrE subfamily. Homodimer. Mg(2+) serves as cofactor.

It catalyses the reaction orotidine 5'-phosphate + diphosphate = orotate + 5-phospho-alpha-D-ribose 1-diphosphate. Its pathway is pyrimidine metabolism; UMP biosynthesis via de novo pathway; UMP from orotate: step 1/2. Its function is as follows. Catalyzes the transfer of a ribosyl phosphate group from 5-phosphoribose 1-diphosphate to orotate, leading to the formation of orotidine monophosphate (OMP). The sequence is that of Orotate phosphoribosyltransferase from Tropheryma whipplei (strain Twist) (Whipple's bacillus).